A 231-amino-acid chain; its full sequence is MAGKKVLIVYAHQEPRSFNGSLKNVAVDELSRQGCTVTVSDLYAMNFEPRATKKDITGALSNPEVFHYGVETHEAYKQRSLASDITDEQKKVQEADLVIFQFPLYWFSVPAILKGWMDRVLCQGFAFDIPGFYDSGLLQGKLALLSVTTGGTAEMYTKTGVNGDFRYFLWPLQHGTLHFCGFKVLAPQISFAPEIASEEERKGMVAAWSQRLQTIWKEEPIPCTAHWYFRQ.

Residues His-12 and Phe-18–Ser-21 each bind FAD. The residue at position 80 (Ser-80) is a Phosphoserine. Leu-104–Phe-107 is an FAD binding site. Phe-127 to Ile-129 contacts substrate. FAD-binding positions include Thr-148–Gly-151 and Tyr-156. Zn(2+) is bound by residues His-174 and His-178. FAD is bound at residue Glu-194. Residue Ser-197 is modified to Phosphoserine. An FAD-binding site is contributed by Arg-201. Cys-223 contacts Zn(2+).

Belongs to the NAD(P)H dehydrogenase (quinone) family. As to quaternary structure, homodimer. Zn(2+) serves as cofactor. FAD is required as a cofactor.

The protein localises to the cytoplasm. It carries out the reaction 1-(beta-D-ribofuranosyl)-1,4-dihydronicotinamide + a quinone + H(+) = beta-nicotinamide D-riboside + a quinol. The enzyme apparently serves as a quinone reductase in connection with conjugation reactions of hydroquinones involved in detoxification pathways as well as in biosynthetic processes such as the vitamin K-dependent gamma-carboxylation of glutamate residues in prothrombin synthesis. The protein is Ribosyldihydronicotinamide dehydrogenase [quinone] (NQO2) of Pongo abelii (Sumatran orangutan).